Reading from the N-terminus, the 150-residue chain is Depactin (150 aa).

The region spanning 3-148 is the ADF-H domain; it reads SGTALDENVK…SEEAIGDKIK (146 aa).

Belongs to the actin-binding proteins ADF family.

Depactin interacts with actin at some of its 12 N-terminal residues and 20 C-terminal residues. Binds to actin monomers from filaments and in solution. This is Depactin from Asterias amurensis (Northern Pacific seastar).